The primary structure comprises 658 residues: Probable replication factor A 73 kDa subunit (658 aa).

Disordered regions lie at residues 134–155 (PEVK…RPNI) and 169–222 (SEFQ…TERG). Residues 236-326 (FRIHGMVSRK…TLRNDSVVEA (91 aa)) constitute a DNA-binding region (OB). The C4-type zinc-finger motif lies at 518–539 (CASEGCQKKVIESDGEYRCEKC).

Belongs to the replication factor A protein 1 family. In terms of assembly, component of the heterotrimeric canonical replication protein A complex (RPA).

It localises to the nucleus. Its function is as follows. As part of the heterotrimeric replication protein A complex (RPA/RP-A), binds and stabilizes single-stranded DNA intermediates, that form during DNA replication or upon DNA stress. It prevents their reannealing and in parallel, recruits and activates different proteins and complexes involved in DNA metabolism. Thereby, it plays an essential role both in DNA replication and the cellular response to DNA damage. The chain is Probable replication factor A 73 kDa subunit from Caenorhabditis briggsae.